We begin with the raw amino-acid sequence, 248 residues long: 2,3-bisphosphoglycerate-dependent phosphoglycerate mutase (248 aa).

Residues 8–15 (RHGESTWN), 21–22 (TG), arginine 60, 87–90 (ERHY), lysine 98, 114–115 (RR), and 183–184 (GN) contribute to the substrate site. The active-site Tele-phosphohistidine intermediate is the histidine 9. Glutamate 87 acts as the Proton donor/acceptor in catalysis.

Belongs to the phosphoglycerate mutase family. BPG-dependent PGAM subfamily. In terms of assembly, homodimer.

It catalyses the reaction (2R)-2-phosphoglycerate = (2R)-3-phosphoglycerate. The protein operates within carbohydrate degradation; glycolysis; pyruvate from D-glyceraldehyde 3-phosphate: step 3/5. In terms of biological role, catalyzes the interconversion of 2-phosphoglycerate and 3-phosphoglycerate. In Burkholderia orbicola (strain MC0-3), this protein is 2,3-bisphosphoglycerate-dependent phosphoglycerate mutase.